A 376-amino-acid chain; its full sequence is DNA replication and repair protein RecF (376 aa).

30-37 contributes to the ATP binding site; sequence GNNAQGKS.

Belongs to the RecF family.

Its subcellular location is the cytoplasm. Functionally, the RecF protein is involved in DNA metabolism; it is required for DNA replication and normal SOS inducibility. RecF binds preferentially to single-stranded, linear DNA. It also seems to bind ATP. In Trichormus variabilis (strain ATCC 29413 / PCC 7937) (Anabaena variabilis), this protein is DNA replication and repair protein RecF.